The chain runs to 1043 residues: Protein SLOW WALKER 2 (1043 aa).

Disordered stretches follow at residues 32-113 (SALP…SIDD), 444-469 (QGAD…VSTD), 632-737 (DIEH…GGYD), and 861-1043 (SKKK…KASE). The short motif at 44–51 (FRKPAKSK) is the Nuclear localization signal 1 element. Residues 47–59 (PAKSKTQKRKKPK) are compositionally biased toward basic residues. Composition is skewed to basic and acidic residues over residues 80–95 (EKGK…KDAP) and 444–466 (QGAD…KQEV). The Nuclear localization signal 2 signature appears at 441 to 448 (NRKQGADD). Acidic residues predominate over residues 632-645 (DIEHFEDVIEGDDV). Residues 646–673 (DPNKKAENDENVVEVDHDGVEKSSRDGD) are compositionally biased toward basic and acidic residues. Composition is skewed to acidic residues over residues 688–699 (DEEDDNASDDSE) and 872–983 (EEAA…DSDG). Residues 988-1000 (SKKKKKEKRKRKS) show a composition bias toward basic residues. Over residues 1006–1031 (EEYKHLIDQDEKEDSKTKRKATSEPT) the composition is skewed to basic and acidic residues. Positions 1022–1029 (TKRKATSE) match the Nuclear localization signal 3 motif. A compositionally biased stretch (basic residues) spans 1032–1043 (KKKKKKKSKASE).

The protein belongs to the CBF/MAK21 family. Interacts with RBL in both the nucleolus and nucleoplasm. Binds to NOC2. In terms of tissue distribution, mainly expressed in actively dividing tissues (e.g. root tips, lateral root primordia, shoot apices, young leaves, inflorescences and pollen grains) through the plant, including roots, stems, leaves, inflorescences, siliques and seedlings, and in gametophytes.

Its subcellular location is the nucleus. It is found in the nucleolus. Together with NOC2, probably involved in pre-ribosome export from the nucleus to the cytoplasm. Required for coordinated cell cycle progression during female gametophyte and pollen development. The sequence is that of Protein SLOW WALKER 2 from Arabidopsis thaliana (Mouse-ear cress).